The following is a 181-amino-acid chain: ATP synthase subunit b (181 aa).

A helical transmembrane segment spans residues 12-32 (LPAVYDIVWSAVVFVVLLVVI).

This sequence belongs to the ATPase B chain family. As to quaternary structure, F-type ATPases have 2 components, F(1) - the catalytic core - and F(0) - the membrane proton channel. F(1) has five subunits: alpha(3), beta(3), gamma(1), delta(1), epsilon(1). F(0) has three main subunits: a(1), b(2) and c(10-14). The alpha and beta chains form an alternating ring which encloses part of the gamma chain. F(1) is attached to F(0) by a central stalk formed by the gamma and epsilon chains, while a peripheral stalk is formed by the delta and b chains.

Its subcellular location is the cell membrane. Its function is as follows. F(1)F(0) ATP synthase produces ATP from ADP in the presence of a proton or sodium gradient. F-type ATPases consist of two structural domains, F(1) containing the extramembraneous catalytic core and F(0) containing the membrane proton channel, linked together by a central stalk and a peripheral stalk. During catalysis, ATP synthesis in the catalytic domain of F(1) is coupled via a rotary mechanism of the central stalk subunits to proton translocation. In terms of biological role, component of the F(0) channel, it forms part of the peripheral stalk, linking F(1) to F(0). This chain is ATP synthase subunit b, found in Clavibacter sepedonicus (Clavibacter michiganensis subsp. sepedonicus).